The following is a 287-amino-acid chain: 26S proteasome non-ATPase regulatory subunit 8 (287 aa).

Serine 43 carries the phosphoserine modification. Residues 99-268 (PSFERYMAQL…QQKPEDTTIP (170 aa)) form the PCI domain. Residue lysine 234 forms a Glycyl lysine isopeptide (Lys-Gly) (interchain with G-Cter in SUMO2) linkage.

It belongs to the proteasome subunit S14 family. Component of the 19S proteasome regulatory particle complex. The 26S proteasome consists of a 20S core particle (CP) and two 19S regulatory subunits (RP). The regulatory particle is made of a lid composed of 9 subunits including PSMD8, a base containing 6 ATPases and few additional components. Interacts with DDI2. Interacts with TASOR.

Component of the 26S proteasome, a multiprotein complex involved in the ATP-dependent degradation of ubiquitinated proteins. This complex plays a key role in the maintenance of protein homeostasis by removing misfolded or damaged proteins, which could impair cellular functions, and by removing proteins whose functions are no longer required. Therefore, the proteasome participates in numerous cellular processes, including cell cycle progression, apoptosis, or DNA damage repair. This chain is 26S proteasome non-ATPase regulatory subunit 8 (PSMD8), found in Bos taurus (Bovine).